The primary structure comprises 515 residues: Zinc metalloproteinase-disintegrin BA-5A (515 aa).

The N-terminal stretch at Met-1–Ser-20 is a signal peptide. A propeptide spanning residues Ile-21 to Ser-193 is cleaved from the precursor. The Peptidase M12B domain occupies Arg-203 to Pro-399. N-linked (GlcNAc...) asparagine glycosylation occurs at Asn-263. Disulfide bonds link Cys-314-Cys-394, Cys-354-Cys-378, Cys-356-Cys-361, Cys-410-Cys-429, Cys-421-Cys-439, Cys-423-Cys-434, Cys-433-Cys-456, Cys-447-Cys-453, Cys-452-Cys-478, Cys-465-Cys-485, and Cys-472-Cys-497. Zn(2+) is bound at residue His-339. The active site involves Glu-340. His-343 and His-349 together coordinate Zn(2+). A glycan (N-linked (GlcNAc...) asparagine) is linked at Asn-377. One can recognise a Disintegrin domain in the interval Pro-407–Asn-493. Positions Glu-471–Asp-473 match the D/ECD-tripeptide motif.

It belongs to the venom metalloproteinase (M12B) family. P-II subfamily. In terms of assembly, monomer. The cofactor is Zn(2+). In terms of tissue distribution, expressed by the venom gland.

The protein localises to the secreted. Its function is as follows. Snake venom zinc metalloprotease that possesses hemorrhagic activity and degrades alpha chain of fibrinogen (FGA). May inhibit alpha-2/beta-1 integrin (ITGA2/ITGB1). The protein is Zinc metalloproteinase-disintegrin BA-5A of Bitis arietans (African puff adder).